The following is a 161-amino-acid chain: Nucleotide-binding protein Shew185_3601 (161 aa).

This sequence belongs to the YajQ family.

Nucleotide-binding protein. The chain is Nucleotide-binding protein Shew185_3601 from Shewanella baltica (strain OS185).